Consider the following 171-residue polypeptide: Disulfide bond formation protein B (171 aa).

The Cytoplasmic segment spans residues 1-13 (MTFISNLADTRLA). Residues 14 to 30 (WGLLFLSALVLVAYALF) form a helical membrane-spanning segment. The Periplasmic portion of the chain corresponds to 31-48 (SQHAMGLQPCIMCIYQRT). Cys-40 and Cys-43 are oxidised to a cystine. Residues 49-63 (AIFGIMFACVPVLAA) traverse the membrane as a helical segment. The Cytoplasmic segment spans residues 64 to 70 (NNMLTRL). The chain crosses the membrane as a helical span at residues 71-88 (FAFTVWGISAIWGGLIAW). Topologically, residues 89 to 144 (EHYDIQNAANPFFATCEIVPNFPSWLPLHEWLPNLFAATGDCGNIDWVFMDMSMPQ) are periplasmic. A disulfide bridge links Cys-104 with Cys-130. The chain crosses the membrane as a helical span at residues 145–163 (WMMVVFAIYSSIWFVVLAS). At 164–171 (RLIGNRAI) the chain is on the cytoplasmic side.

Belongs to the DsbB family.

The protein resides in the cell inner membrane. Required for disulfide bond formation in some periplasmic proteins. Acts by oxidizing the DsbA protein. The protein is Disulfide bond formation protein B of Pseudoalteromonas atlantica (strain T6c / ATCC BAA-1087).